A 242-amino-acid polypeptide reads, in one-letter code: Leucyl/phenylalanyl-tRNA--protein transferase (242 aa).

The protein belongs to the L/F-transferase family.

The protein localises to the cytoplasm. The catalysed reaction is N-terminal L-lysyl-[protein] + L-leucyl-tRNA(Leu) = N-terminal L-leucyl-L-lysyl-[protein] + tRNA(Leu) + H(+). The enzyme catalyses N-terminal L-arginyl-[protein] + L-leucyl-tRNA(Leu) = N-terminal L-leucyl-L-arginyl-[protein] + tRNA(Leu) + H(+). It carries out the reaction L-phenylalanyl-tRNA(Phe) + an N-terminal L-alpha-aminoacyl-[protein] = an N-terminal L-phenylalanyl-L-alpha-aminoacyl-[protein] + tRNA(Phe). In terms of biological role, functions in the N-end rule pathway of protein degradation where it conjugates Leu, Phe and, less efficiently, Met from aminoacyl-tRNAs to the N-termini of proteins containing an N-terminal arginine or lysine. The sequence is that of Leucyl/phenylalanyl-tRNA--protein transferase from Alcanivorax borkumensis (strain ATCC 700651 / DSM 11573 / NCIMB 13689 / SK2).